A 262-amino-acid polypeptide reads, in one-letter code: Ribosomal RNA small subunit methyltransferase A (262 aa).

S-adenosyl-L-methionine contacts are provided by histidine 13, leucine 15, glycine 40, glutamate 61, aspartate 85, and asparagine 103.

This sequence belongs to the class I-like SAM-binding methyltransferase superfamily. rRNA adenine N(6)-methyltransferase family. RsmA subfamily.

It localises to the cytoplasm. The enzyme catalyses adenosine(1518)/adenosine(1519) in 16S rRNA + 4 S-adenosyl-L-methionine = N(6)-dimethyladenosine(1518)/N(6)-dimethyladenosine(1519) in 16S rRNA + 4 S-adenosyl-L-homocysteine + 4 H(+). Its function is as follows. Specifically dimethylates two adjacent adenosines (A1518 and A1519) in the loop of a conserved hairpin near the 3'-end of 16S rRNA in the 30S particle. May play a critical role in biogenesis of 30S subunits. The sequence is that of Ribosomal RNA small subunit methyltransferase A from Bordetella petrii (strain ATCC BAA-461 / DSM 12804 / CCUG 43448).